We begin with the raw amino-acid sequence, 4699 residues long: PKS-NRPS hybrid synthetase cheA (4699 aa).

A compositionally biased stretch (acidic residues) spans 1 to 21; the sequence is MSDNDDEWNGFSDDNGEDDGP. Disordered regions lie at residues 1–38 and 136–165; these read MSDN…WDVP and DGWR…HTQH. Over residues 136-148 the composition is skewed to basic and acidic residues; that stretch reads DGWRFHSHPDPQH. Residues 172–520 form an N-terminal acylcarrier protein transacylase domain (SAT) region; the sequence is SLDTIAELSN…VQQNVEEMAK (349 aa). Residues 625–836 form a disordered region; sequence PLPSVEDNVA…AGAPGARVTR (212 aa). A compositionally biased stretch (low complexity) spans 674–688; the sequence is TQGSQGSQGRRTPGS. Over residues 724 to 737 the composition is skewed to basic residues; the sequence is PKRRGRPPGSKNKK. Residues 737 to 1138 form the Ketosynthase family 3 (KS3) domain; the sequence is KKDQAPAPAE…GANAHAILEA (402 aa). Residues 764-777 show a composition bias toward low complexity; that stretch reads ASAPRRGLRAAPAA. The span at 802–816 shows a compositional bias: polar residues; sequence ATASTPRAQSDQGTG. Active-site for beta-ketoacyl synthase activity residues include Cys873, His1012, and His1058. The interval 1250 to 1573 is malonyl-CoA:ACP transacylase (MAT) domain; the sequence is VFTGQGAQWP…VGTLLRQRDA (324 aa). The N-terminal hotdog fold stretch occupies residues 1644–1777; that stretch reads NELLGTRIMD…ANLIISLGEP (134 aa). Residues 1644–1947 form the PKS/mFAS DH domain; that stretch reads NELLGTRIMD…TKPLVPPTPS (304 aa). Residues 1645–1941 form a dehydratase (DH) domain region; that stretch reads ELLGTRIMDN…QLQGLHTKPL (297 aa). Residue His1676 is the Proton acceptor; for dehydratase activity of the active site. The tract at residues 1794–1947 is C-terminal hotdog fold; the sequence is MLDVPAERFY…TKPLVPPTPS (154 aa). Asp1854 serves as the catalytic Proton donor; for dehydratase activity. A methyltransferase (MT) domain region spans residues 2050–2241; the sequence is LNRFYIEALG…RNTGFSGADE (192 aa). The segment at 2794–2967 is ketoreductase (KR) domain; sequence TYWLVGLTGG…PAAAVNIGAV (174 aa). A Carrier 1 domain is found at 3076–3153; that stretch reads DASEILEDAY…ALFELVKERA (78 aa). An O-(pantetheine 4'-phosphoryl)serine modification is found at Ser3113. The tract at residues 3164 to 3265 is disordered; the sequence is EQPDQVKSPR…PVASSPDAGL (102 aa). 2 stretches are compositionally biased toward polar residues: residues 3200-3209 and 3218-3233; these read SLDQGSSWDS and GHDS…SSPI. The segment at 3268–3696 is condensation (C) domain; that stretch reads SVPLSFSQAR…PISRISKPPL (429 aa). The segment at 3730-4113 is adenylation (A) domain; sequence IQAHPDKLAL…GGLILEGRID (384 aa). One can recognise a Carrier 2 domain in the interval 4236 to 4316; it reads EGLPAMQHLI…TMAALVASGS (81 aa). The segment at 4241–4313 is thiolation and peptide carrier (T) domain; the sequence is MQHLIKQLWE…TLETMAALVA (73 aa). Ser4276 is subject to O-(pantetheine 4'-phosphoryl)serine. Positions 4367 to 4598 are reductase (R) domain; the sequence is LTGSTGFLGR…ISVHTVAAAI (232 aa).

In the C-terminal section; belongs to the NRP synthetase family.

Its pathway is secondary metabolite biosynthesis. Its function is as follows. PKS-NRPS hybrid synthetase; part of the gene cluster that mediates the biosynthesis of chaetoglobosin A which has a unique inhibitory activity against actin polymerization in mammalian cells. Chaetoglobosin A and its intermediates are involved in the morphological differentiation of C.globosum. The first step of the pathway is the synthesis of prochaetoglobosin I via condensation of one acetyl-CoA, 8 malonyl-CoA, and a L-tryptophan molecule by the PKS-NRPS hybrid synthetase cheA, followed by reduction of backbone double bond to install desired geometry by the enoyl reductase cheB. Further multiple oxidation steps performed by the cytochrome P450 monooxygenases cheE and cheG, as well as by the FAD-linked oxidoreductase cheF, lead to the formation of chaetoglobosin A. Depending on the order of action of these reductases, distinct intermediates can be identified. Within the pathway, the cytochrome P450 monooxygenase cheE catalyzes a stereospecific epoxidation on prochaetoglobosin I, cytoglobosin D, and chaetoglobosin J intermediates. The FAD-linked oxidoreductase cheF performs dehydrogenation of the C-20 hydroxyl groups in the 20-dihyrochaetoglobosin A and cytoglobosin D intermediates. Finally, the cytochrome P450 monooxygenase cheG can catalyze the stereospecific dihydroxylation of prochaetoglobosin I and prochaetoglobosin IV at C-19 and C-20, respectively. The Diels-Alderase cheD may play a role in the post-PKS-NRPS biosynthetic steps catalyzing Diels-Alder cyclization. This Chaetomium globosum (strain ATCC 6205 / CBS 148.51 / DSM 1962 / NBRC 6347 / NRRL 1970) (Soil fungus) protein is PKS-NRPS hybrid synthetase cheA.